A 146-amino-acid chain; its full sequence is Ribosome maturation factor RimP (146 aa).

Belongs to the RimP family.

Its subcellular location is the cytoplasm. Required for maturation of 30S ribosomal subunits. This chain is Ribosome maturation factor RimP, found in Helicobacter pylori (strain G27).